The primary structure comprises 369 residues: Histone deacetylase 8 (369 aa).

The interval 5–316 (LLPVYIHSAE…WTYLTALIVG (312 aa)) is histone deacetylase. Asp-93 contacts substrate. His-135 (proton acceptor) is an active-site residue. Gly-143 contributes to the substrate binding site. Positions 170, 172, and 259 each coordinate a divalent metal cation. Substrate is bound at residue Tyr-298.

Belongs to the histone deacetylase family. HD type 1 subfamily. It depends on a divalent metal cation as a cofactor.

It is found in the nucleus. Its subcellular location is the chromosome. The protein localises to the cytoplasm. The catalysed reaction is N(6)-acetyl-L-lysyl-[histone] + H2O = L-lysyl-[histone] + acetate. It carries out the reaction N(6)-acetyl-L-lysyl-[protein] + H2O = L-lysyl-[protein] + acetate. It catalyses the reaction N(6)-(2E)-butenoyl-L-lysyl-[protein] + H2O = (2E)-2-butenoate + L-lysyl-[protein]. Its activity is regulated as follows. Its activity is inhibited by trichostatin A (TSA) and butyrate, 2 well known histone deacetylase inhibitors. Functionally, histone deacetylase that catalyzes the deacetylation of lysine residues on the N-terminal part of the core histones (H2A, H2B, H3 and H4). Histone deacetylation gives a tag for epigenetic repression and plays an important role in transcriptional regulation, cell cycle progression and developmental events. Histone deacetylases act via the formation of large multiprotein complexes. Also involved in the deacetylation of non-histone proteins. In addition to protein deacetylase activity, also has protein-lysine deacylase activity: acts as a protein decrotonylase by mediating decrotonylation ((2E)-butenoyl) of histones. This Xenopus tropicalis (Western clawed frog) protein is Histone deacetylase 8 (hdac8).